The following is a 226-amino-acid chain: Imidazoleglycerol-phosphate dehydratase (226 aa).

The disordered stretch occupies residues 23–55; sequence LTGGPIERPQPSLFASEKGANTAGPDDASQTTA.

This sequence belongs to the imidazoleglycerol-phosphate dehydratase family.

The catalysed reaction is D-erythro-1-(imidazol-4-yl)glycerol 3-phosphate = 3-(imidazol-4-yl)-2-oxopropyl phosphate + H2O. Its pathway is amino-acid biosynthesis; L-histidine biosynthesis; L-histidine from 5-phospho-alpha-D-ribose 1-diphosphate: step 6/9. This is Imidazoleglycerol-phosphate dehydratase (HIS3) from Maudiozyma humilis (Sour dough yeast).